Reading from the N-terminus, the 132-residue chain is Protamine (132 aa).

2 disordered regions span residues G17 to R46 and S96 to R115. 2 stretches are compositionally biased toward basic residues: residues G18–R46 and L98–R115.

The protein belongs to the UPF0771 family. Testis.

The protein localises to the nucleus. It localises to the chromosome. Its function is as follows. Protamines substitute for histones in the chromatin of sperm during the haploid phase of spermatogenesis. They compact sperm DNA into a highly condensed, stable and inactive complex. In Anthonomus grandis (Mexican cotton boll weevil), this protein is Protamine.